Here is a 359-residue protein sequence, read N- to C-terminus: NAC transcription factor 47 (359 aa).

The NAC domain maps to 10–186 (LPPGFRFHPT…DWVLCRIYKK (177 aa)). Residues 112-192 (IGIKKALVFY…IYKKSHASLS (81 aa)) mediate DNA binding. Disordered stretches follow at residues 147–166 (KRIN…FGDR) and 200–226 (TSNQ…LQND). Over residues 148-165 (RINSSRSGGSEVNNNFGD) the composition is skewed to polar residues.

The protein resides in the nucleus. Its function is as follows. Transcription factor that binds to the promoter of ACO5, an ACC oxidase involved in ethylene biosynthesis. Mediates waterlogging-induced hyponastic leaf movement, and cell expansion in abaxial cells of the basal petiole region, by directly regulating the expression of ACO5. Required for normal seed development and morphology. The chain is NAC transcription factor 47 from Arabidopsis thaliana (Mouse-ear cress).